A 167-amino-acid chain; its full sequence is Transmembrane protein 229B (167 aa).

The Cytoplasmic segment spans residues 1–14 (MASAEPLTALSRWY). A helical transmembrane segment spans residues 15 to 35 (LYAIHGYFCEVMFTAAWEFVV). The Extracellular portion of the chain corresponds to 36–40 (NFNWK). A helical transmembrane segment spans residues 41-61 (FPGVTSVWALFIYGTSILIVE). Over 62-73 (RMYLRLRGRCPL) the chain is Cytoplasmic. Residues 74 to 94 (LVRCVIYTLWTYLWEFTTGFI) traverse the membrane as a helical segment. The Extracellular segment spans residues 95 to 109 (LRQFNACPWDYSQFD). Residues 110–130 (FDFMGLITLEYAVPWFCGALI) traverse the membrane as a helical segment. Residues 131-167 (MEQFIIRNTLRLRFDKDAEPGEPASPPALANGHVKTD) lie on the Cytoplasmic side of the membrane. The tract at residues 148-167 (AEPGEPASPPALANGHVKTD) is disordered.

The protein belongs to the TMEM229 family.

The protein resides in the membrane. The chain is Transmembrane protein 229B (TMEM229B) from Mus musculus (Mouse).